The primary structure comprises 160 residues: Cytochrome b6-f complex subunit 4 (160 aa).

3 consecutive transmembrane segments (helical) span residues Leu36–Val56, Leu95–Glu115, and Ala131–Ile151.

The protein belongs to the cytochrome b family. PetD subfamily. As to quaternary structure, the 4 large subunits of the cytochrome b6-f complex are cytochrome b6, subunit IV (17 kDa polypeptide, petD), cytochrome f and the Rieske protein, while the 4 small subunits are petG, petL, petM and petN. The complex functions as a dimer.

It is found in the plastid. Its subcellular location is the chloroplast thylakoid membrane. Its function is as follows. Component of the cytochrome b6-f complex, which mediates electron transfer between photosystem II (PSII) and photosystem I (PSI), cyclic electron flow around PSI, and state transitions. The sequence is that of Cytochrome b6-f complex subunit 4 from Bigelowiella natans (Pedinomonas minutissima).